Here is a 304-residue protein sequence, read N- to C-terminus: Non-specific ribonucleoside hydrolase RihC (304 aa).

The active site involves His233.

This sequence belongs to the IUNH family. RihC subfamily.

Hydrolyzes both purine and pyrimidine ribonucleosides with a broad-substrate specificity. This is Non-specific ribonucleoside hydrolase RihC from Escherichia coli O157:H7.